Here is a 1624-residue protein sequence, read N- to C-terminus: Reverse gyrase (1624 aa).

The RG N-terminal-type zinc-finger motif lies at 1–42; that stretch reads MKAIYRGMCPNCRGAITDERLSNKNPCEGCLSEPILSEDYNE. Zn(2+) contacts are provided by Cys-9, Cys-12, Cys-27, and Cys-30. Residues Gln-89 and 106 to 113 contribute to the ATP site; that span reads APTGMGKS. One can recognise a Helicase ATP-binding domain in the interval 93 to 256; it reads VKRIIRGKSF…KLKKQLAKLL (164 aa). A DEAD box motif is present at residues 213-216; the sequence is DDVD. Residues 636 to 1624 form a topoisomerase I region; sequence DLVKSALMIV…LYEEIKRYVR (989 aa). The 164-residue stretch at 640–803 folds into the Toprim domain; the sequence is SALMIVESPN…NIKRIEFHEV (164 aa). Position 646 (Glu-646) interacts with Mg(2+). An RG C-terminal-type zinc finger spans residues 720-749; the sequence is IKRCRDCGHQFVDWEQKGVCPRCGSRNVHD. Residues Cys-723, Cys-726, Cys-739, and Cys-742 each contribute to the Zn(2+) site. Asp-772 serves as a coordination point for Mg(2+). The region spanning 819–1623 is the Topo IA-type catalytic domain; it reads NEDRVNAQLV…ELYEEIKRYV (805 aa). In terms of domain architecture, DOD-type homing endonuclease spans 1107–1222; sequence IFGVILGKGT…LSVYLYQIGI (116 aa). Tyr-1366 acts as the O-(5'-phospho-DNA)-tyrosine intermediate in catalysis.

The protein in the N-terminal section; belongs to the DEAD box helicase family. DDVD subfamily. In the C-terminal section; belongs to the type IA topoisomerase family. Monomer. Zn(2+) is required as a cofactor. Mg(2+) serves as cofactor. Post-translationally, this protein undergoes a protein self splicing that involves a post-translational excision of the intervening region (intein) followed by peptide ligation.

Its subcellular location is the cytoplasm. It catalyses the reaction ATP + H2O = ADP + phosphate + H(+). Its function is as follows. Modifies the topological state of DNA by introducing positive supercoils in an ATP-dependent process, increasing the linking number in steps of +1. Binds to single-stranded DNA, transiently cleaves and then rejoins the ends, introducing a positive supercoil in the process. The scissile phosphodiester is attacked by the catalytic tyrosine of the enzyme, resulting in the formation of a DNA-(5'-phosphotyrosyl)-enzyme intermediate. Probably involved in rewinding DNA strands in regions of the chromosome that have opened up to allow replication, transcription, DNA repair and/or for DNA protection. This is Reverse gyrase from Pyrococcus horikoshii (strain ATCC 700860 / DSM 12428 / JCM 9974 / NBRC 100139 / OT-3).